Consider the following 277-residue polypeptide: Orotidine 5'-phosphate decarboxylase (277 aa).

Substrate contacts are provided by residues aspartate 40, 62 to 64 (KTH), 93 to 102 (DRKFIDIGNT), tyrosine 229, and arginine 247. The Proton donor role is filled by lysine 95.

The protein belongs to the OMP decarboxylase family.

It catalyses the reaction orotidine 5'-phosphate + H(+) = UMP + CO2. The protein operates within pyrimidine metabolism; UMP biosynthesis via de novo pathway; UMP from orotate: step 2/2. In Aspergillus oryzae (strain ATCC 42149 / RIB 40) (Yellow koji mold), this protein is Orotidine 5'-phosphate decarboxylase (pyrG).